The primary structure comprises 638 residues: 1-deoxy-D-xylulose-5-phosphate synthase (638 aa).

Residues His-79 and 120–122 (GHS) contribute to the thiamine diphosphate site. Residue Asp-151 coordinates Mg(2+). Thiamine diphosphate-binding positions include 152-153 (GA), Asn-182, Tyr-291, and Glu-373. Asn-182 provides a ligand contact to Mg(2+).

The protein belongs to the transketolase family. DXPS subfamily. In terms of assembly, homodimer. Mg(2+) serves as cofactor. The cofactor is thiamine diphosphate.

The catalysed reaction is D-glyceraldehyde 3-phosphate + pyruvate + H(+) = 1-deoxy-D-xylulose 5-phosphate + CO2. Its pathway is metabolic intermediate biosynthesis; 1-deoxy-D-xylulose 5-phosphate biosynthesis; 1-deoxy-D-xylulose 5-phosphate from D-glyceraldehyde 3-phosphate and pyruvate: step 1/1. Catalyzes the acyloin condensation reaction between C atoms 2 and 3 of pyruvate and glyceraldehyde 3-phosphate to yield 1-deoxy-D-xylulose-5-phosphate (DXP). This chain is 1-deoxy-D-xylulose-5-phosphate synthase, found in Xanthomonas euvesicatoria pv. vesicatoria (strain 85-10) (Xanthomonas campestris pv. vesicatoria).